The primary structure comprises 357 residues: GTPase Obg (357 aa).

In terms of domain architecture, Obg spans 1-159 (MKFVDEAEIQ…RTLKLELKLL (159 aa)). Positions 160–343 (ADIGMLGFPN…IMKSAMTLFE (184 aa)) constitute an OBG-type G domain. Residues 166-173 (GFPNVGKS), 191-195 (FTTLY), 213-216 (DVPG), 293-296 (NKAD), and 324-326 (SAV) contribute to the GTP site. 2 residues coordinate Mg(2+): Ser-173 and Thr-193.

It belongs to the TRAFAC class OBG-HflX-like GTPase superfamily. OBG GTPase family. As to quaternary structure, monomer. Mg(2+) serves as cofactor.

Its subcellular location is the cytoplasm. In terms of biological role, an essential GTPase which binds GTP, GDP and possibly (p)ppGpp with moderate affinity, with high nucleotide exchange rates and a fairly low GTP hydrolysis rate. Plays a role in control of the cell cycle, stress response, ribosome biogenesis and in those bacteria that undergo differentiation, in morphogenesis control. In Xylella fastidiosa (strain M12), this protein is GTPase Obg.